The following is a 380-amino-acid chain: Cytochrome b (380 aa).

A run of 4 helical transmembrane segments spans residues 34–54 (FGSLLGICLMTQILTGLLLAM), 78–99 (WLIRNLHANGASFFFICIYLHI), 114–134 (WNTGVILLLTLMATAFVGYVL), and 179–199 (FFALHFLLPFMIAGLTLVHLT). Heme b-binding residues include His-84 and His-98. Positions 183 and 197 each coordinate heme b. Residue His-202 participates in a ubiquinone binding. 4 consecutive transmembrane segments (helical) span residues 227-247 (LKDILGFTLMLLPLTTLALFS), 289-309 (LGGVLALAASVLILFLAPFLH), 321-341 (LSQLLFWILVANLFILTWVGS), and 348-368 (FIIIGQLASFTYFTILLILFP).

Belongs to the cytochrome b family. In terms of assembly, the cytochrome bc1 complex contains 11 subunits: 3 respiratory subunits (MT-CYB, CYC1 and UQCRFS1), 2 core proteins (UQCRC1 and UQCRC2) and 6 low-molecular weight proteins (UQCRH/QCR6, UQCRB/QCR7, UQCRQ/QCR8, UQCR10/QCR9, UQCR11/QCR10 and a cleavage product of UQCRFS1). This cytochrome bc1 complex then forms a dimer. Heme b is required as a cofactor.

The protein resides in the mitochondrion inner membrane. Its function is as follows. Component of the ubiquinol-cytochrome c reductase complex (complex III or cytochrome b-c1 complex) that is part of the mitochondrial respiratory chain. The b-c1 complex mediates electron transfer from ubiquinol to cytochrome c. Contributes to the generation of a proton gradient across the mitochondrial membrane that is then used for ATP synthesis. In Procellaria parkinsoni (Black petrel), this protein is Cytochrome b (MT-CYB).